A 300-amino-acid polypeptide reads, in one-letter code: Ribosomal RNA small subunit methyltransferase H (300 aa).

S-adenosyl-L-methionine-binding positions include 46–48 (GGH), D65, F92, D107, and Q114.

Belongs to the methyltransferase superfamily. RsmH family.

It localises to the cytoplasm. The catalysed reaction is cytidine(1402) in 16S rRNA + S-adenosyl-L-methionine = N(4)-methylcytidine(1402) in 16S rRNA + S-adenosyl-L-homocysteine + H(+). Specifically methylates the N4 position of cytidine in position 1402 (C1402) of 16S rRNA. This is Ribosomal RNA small subunit methyltransferase H from Prochlorococcus marinus (strain MIT 9515).